Reading from the N-terminus, the 432-residue chain is 2-oxoglutarate-dependent dioxygenase AOP2 (432 aa).

In terms of domain architecture, Fe2OG dioxygenase spans 281–378 (SGDDVEANDD…RYTAAIFTCP (98 aa)). Fe cation-binding residues include H301, D303, and H358. Residue R369 participates in 2-oxoglutarate binding.

It belongs to the iron/ascorbate-dependent oxidoreductase family. Requires Fe(2+) as cofactor.

Its function is as follows. 2-oxoglutarate-dependent dioxygenase involved in glucosinolates biosynthesis. Catalyzes the conversion of methylsulfinylalkyl glucosinolates to alkenyl glucosinolates. This is 2-oxoglutarate-dependent dioxygenase AOP2 (AOP2) from Arabidopsis thaliana (Mouse-ear cress).